The sequence spans 117 residues: Synaptobrevin homolog 1 (117 aa).

Residues M1–A30 form a disordered region. The Cytoplasmic segment spans residues M1–M94. The v-SNARE coiled-coil homology domain occupies R28–K88. K63 participates in a covalent cross-link: Glycyl lysine isopeptide (Lys-Gly) (interchain with G-Cter in ubiquitin). C95 carries the S-palmitoyl cysteine lipid modification. A helical; Anchor for type IV membrane protein membrane pass occupies residues C95–I111. Residues A112–R117 lie on the Vesicular side of the membrane.

The protein belongs to the synaptobrevin family. In terms of processing, palmitoylated by SWF1.

It is found in the endomembrane system. Its function is as follows. SNC1 and SNC2 are vesicle-targeting proteins essential for normal secretory traffic between the Golgi and the plasma membrane. They may also be involved in vesicle fusion. The polypeptide is Synaptobrevin homolog 1 (SNC1) (Saccharomyces cerevisiae (strain ATCC 204508 / S288c) (Baker's yeast)).